A 599-amino-acid polypeptide reads, in one-letter code: Elongation factor 4 (599 aa).

The tr-type G domain occupies 5-187 (SHIRNFSIIA…RLVTTIPAPT (183 aa)). GTP contacts are provided by residues 17 to 22 (DHGKST) and 134 to 137 (NKID).

The protein belongs to the TRAFAC class translation factor GTPase superfamily. Classic translation factor GTPase family. LepA subfamily.

It is found in the cell inner membrane. It catalyses the reaction GTP + H2O = GDP + phosphate + H(+). Required for accurate and efficient protein synthesis under certain stress conditions. May act as a fidelity factor of the translation reaction, by catalyzing a one-codon backward translocation of tRNAs on improperly translocated ribosomes. Back-translocation proceeds from a post-translocation (POST) complex to a pre-translocation (PRE) complex, thus giving elongation factor G a second chance to translocate the tRNAs correctly. Binds to ribosomes in a GTP-dependent manner. This chain is Elongation factor 4, found in Pseudomonas fluorescens (strain ATCC BAA-477 / NRRL B-23932 / Pf-5).